A 633-amino-acid chain; its full sequence is Probable methyltransferase PMT15 (633 aa).

At 1–24 (MGNYRWPSKLSKLSLRAKQTNLYR) the chain is on the cytoplasmic side. A helical; Signal-anchor for type II membrane protein transmembrane segment spans residues 25 to 45 (VILIAILCVTFYFVGVWQHSG). Residues 46–633 (RGISRSSISN…APAPDQSSDP (588 aa)) lie on the Lumenal side of the membrane. N-linked (GlcNAc...) asparagine glycosylation is found at N113 and N298.

Belongs to the methyltransferase superfamily.

It localises to the golgi apparatus membrane. The sequence is that of Probable methyltransferase PMT15 from Arabidopsis thaliana (Mouse-ear cress).